The sequence spans 306 residues: Curved DNA-binding protein (306 aa).

The J domain occupies 5–69 (DYYAIMGVKP…QRRAEYDQMW (65 aa)).

It localises to the cytoplasm. Its subcellular location is the nucleoid. Its function is as follows. DNA-binding protein that preferentially recognizes a curved DNA sequence. It is probably a functional analog of DnaJ; displays overlapping activities with DnaJ, but functions under different conditions, probably acting as a molecular chaperone in an adaptive response to environmental stresses other than heat shock. Lacks autonomous chaperone activity; binds native substrates and targets them for recognition by DnaK. Its activity is inhibited by the binding of CbpM. This chain is Curved DNA-binding protein, found in Escherichia coli O8 (strain IAI1).